The primary structure comprises 213 residues: Adenylate kinase (213 aa).

An ATP-binding site is contributed by 14-19 (GSGKGT). The NMP stretch occupies residues 34 to 63 (SSGELFRSAIDSASPLGIKAAEYINQGLLV). Residues Ser35, Arg40, 61-63 (LLV), 89-92 (GFPR), and Gln96 contribute to the AMP site. The interval 129–162 (SRFICPSCKHVYNQNQGLSECPTCQMKLVRRSDD) is LID. Position 130 (Arg130) interacts with ATP. Zn(2+) is bound by residues Cys133 and Cys136. ATP is bound at residue 139-140 (VY). 2 residues coordinate Zn(2+): Cys149 and Cys152. AMP is bound by residues Arg159 and Arg170. An ATP-binding site is contributed by Ala198.

It belongs to the adenylate kinase family. As to quaternary structure, monomer.

It is found in the cytoplasm. It catalyses the reaction AMP + ATP = 2 ADP. It participates in purine metabolism; AMP biosynthesis via salvage pathway; AMP from ADP: step 1/1. Functionally, catalyzes the reversible transfer of the terminal phosphate group between ATP and AMP. Plays an important role in cellular energy homeostasis and in adenine nucleotide metabolism. The protein is Adenylate kinase of Chlamydia abortus (strain DSM 27085 / S26/3) (Chlamydophila abortus).